Here is a 261-residue protein sequence, read N- to C-terminus: Follistatin-related protein 3 (261 aa).

An N-terminal signal peptide occupies residues 1-26 (MRPRAPGPLWPLPWGALAWAVGFVGS). The 72-residue stretch at 36–107 (GVCWLQQGRE…SCEGVECGPG (72 aa)) folds into the TB domain. Disulfide bonds link cysteine 38–cysteine 61, cysteine 48–cysteine 92, cysteine 62–cysteine 95, cysteine 99–cysteine 110, cysteine 104–cysteine 119, cysteine 121–cysteine 153, cysteine 125–cysteine 146, and cysteine 135–cysteine 167. The N-linked (GlcNAc...) asparagine glycan is linked to asparagine 73. The Follistatin-like 1 domain maps to 99 to 119 (CEGVECGPGKACRMLGGRPRC). Kazal-like domains are found at residues 113-169 (LGGR…RCRK) and 189-245 (SAHC…SCAG). The Follistatin-like 2 domain maps to 170 to 193 (SCAHVVCLRPQSCVVDQTGSAHCV). 3 disulfide bridges follow: cysteine 195/cysteine 229, cysteine 200/cysteine 222, and cysteine 211/cysteine 243. Residue asparagine 215 is glycosylated (N-linked (GlcNAc...) asparagine). The disordered stretch occupies residues 242-261 (SCAGTPEPLDPESEEEENFV). The span at 250-261 (LDPESEEEENFV) shows a compositional bias: acidic residues.

In terms of assembly, interacts with INHBA and INHBB. Interacts with FN1. Interacts with ADAM12. Interacts with MLLT10; the interaction enhances MLLT10 in vitro transcriptional activity and self-association. Interacts with MSTN.

It is found in the secreted. The protein localises to the nucleus. The secreted form is a binding and antagonizing protein for members of the TGF-beta family, such as activin, BMP2 and MSTN. Inhibits activin A-, activin B-, BMP2- and MSDT-induced cellular signaling; more effective on activin A than on activin B. Involved in bone formation; inhibits osteoclast differentiation. Involved in hematopoiesis; involved in differentiation of hemopoietic progenitor cells, increases hematopoietic cell adhesion to fibronectin and seems to contribute to the adhesion of hematopoietic precursor cells to the bone marrow stroma. The nuclear form is probably involved in transcriptional regulation via interaction with MLLT10. The chain is Follistatin-related protein 3 (FSTL3) from Bos taurus (Bovine).